Reading from the N-terminus, the 254-residue chain is 5-oxoprolinase subunit A (254 aa).

This sequence belongs to the LamB/PxpA family. As to quaternary structure, forms a complex composed of PxpA, PxpB and PxpC.

The catalysed reaction is 5-oxo-L-proline + ATP + 2 H2O = L-glutamate + ADP + phosphate + H(+). Functionally, catalyzes the cleavage of 5-oxoproline to form L-glutamate coupled to the hydrolysis of ATP to ADP and inorganic phosphate. The protein is 5-oxoprolinase subunit A of Acinetobacter baylyi (strain ATCC 33305 / BD413 / ADP1).